The primary structure comprises 645 residues: Meiosis induction protein kinase IME2/SME1 (645 aa).

A disordered region spans residues 1–24 (MVEKRSRQSSSSGSEFSVPPDVDN). Residues 8–17 (QSSSSGSEFS) show a composition bias toward low complexity. The region spanning 38–386 (YQLIEKLGAG…AQELCEMPFF (349 aa)) is the Protein kinase domain. Residues 44–52 (LGAGSFGCV) and lysine 67 each bind ATP. The Proton acceptor role is filled by aspartate 193.

Belongs to the protein kinase superfamily. Ser/Thr protein kinase family.

The enzyme catalyses L-seryl-[protein] + ATP = O-phospho-L-seryl-[protein] + ADP + H(+). The catalysed reaction is L-threonyl-[protein] + ATP = O-phospho-L-threonyl-[protein] + ADP + H(+). Its function is as follows. Protein kinase which is essential for the initiation of meiosis and sporulation. The chain is Meiosis induction protein kinase IME2/SME1 (IME2) from Saccharomyces cerevisiae (strain ATCC 204508 / S288c) (Baker's yeast).